The following is a 359-amino-acid chain: Aminomethyltransferase (359 aa).

It belongs to the GcvT family. The glycine cleavage system is composed of four proteins: P, T, L and H.

The enzyme catalyses N(6)-[(R)-S(8)-aminomethyldihydrolipoyl]-L-lysyl-[protein] + (6S)-5,6,7,8-tetrahydrofolate = N(6)-[(R)-dihydrolipoyl]-L-lysyl-[protein] + (6R)-5,10-methylene-5,6,7,8-tetrahydrofolate + NH4(+). Functionally, the glycine cleavage system catalyzes the degradation of glycine. In Pseudoalteromonas atlantica (strain T6c / ATCC BAA-1087), this protein is Aminomethyltransferase.